The following is a 95-amino-acid chain: Putative protein RDUR (95 aa).

Basic and acidic residues predominate over residues 1 to 12; it reads MNNSFNKEDRMS. The interval 1 to 20 is disordered; it reads MNNSFNKEDRMSSDTMVGSC.

Functionally, could play a role in innate immunity against viruses. The sequence is that of Putative protein RDUR from Homo sapiens (Human).